Here is a 404-residue protein sequence, read N- to C-terminus: Probable tRNA sulfurtransferase (404 aa).

Residues 61–166 (EAVSERLKDV…SGYSYIMCDE (106 aa)) enclose the THUMP domain. Residues 184 to 185 (LL), 209 to 210 (HF), Arg-266, Gly-288, and Gln-297 contribute to the ATP site.

This sequence belongs to the ThiI family.

The protein resides in the cytoplasm. The enzyme catalyses [ThiI sulfur-carrier protein]-S-sulfanyl-L-cysteine + a uridine in tRNA + 2 reduced [2Fe-2S]-[ferredoxin] + ATP + H(+) = [ThiI sulfur-carrier protein]-L-cysteine + a 4-thiouridine in tRNA + 2 oxidized [2Fe-2S]-[ferredoxin] + AMP + diphosphate. The catalysed reaction is [ThiS sulfur-carrier protein]-C-terminal Gly-Gly-AMP + S-sulfanyl-L-cysteinyl-[cysteine desulfurase] + AH2 = [ThiS sulfur-carrier protein]-C-terminal-Gly-aminoethanethioate + L-cysteinyl-[cysteine desulfurase] + A + AMP + 2 H(+). It functions in the pathway cofactor biosynthesis; thiamine diphosphate biosynthesis. Functionally, catalyzes the ATP-dependent transfer of a sulfur to tRNA to produce 4-thiouridine in position 8 of tRNAs, which functions as a near-UV photosensor. Also catalyzes the transfer of sulfur to the sulfur carrier protein ThiS, forming ThiS-thiocarboxylate. This is a step in the synthesis of thiazole, in the thiamine biosynthesis pathway. The sulfur is donated as persulfide by IscS. This Bacillus cereus (strain ATCC 10987 / NRS 248) protein is Probable tRNA sulfurtransferase.